The sequence spans 275 residues: T cell receptor alpha chain MC.7.G5 (275 aa).

Positions 1–21 are cleaved as a signal peptide; sequence MACPGFLWALVISTCLEFSMA. In terms of domain architecture, Ig-like V-type spans 22 to 116; that stretch reads QTVTQSQPEM…AAMYFCAYRS (95 aa). The tract at residues 22 to 116 is t cell receptor alpha variable 38-2DV8; that stretch reads QTVTQSQPEM…AAMYFCAYRS (95 aa). Cysteines 43 and 112 form a disulfide. The CDR1 stretch occupies residues 47-53; the sequence is TSESDYY. The interval 71-81 is CDR2; the sequence is QEAYKQQNATE. N-linked (GlcNAc...) asparagine glycosylation is present at Asn78. A CDR3 region spans residues 112 to 124; it reads CAYRSAVNARLMF. Positions 119–134 are t cell receptor alpha joining 31; that stretch reads NARLMFGDGTQLVVKP. A t cell receptor alpha constant region spans residues 136 to 275; it reads IQNPDPAVYQ…LLMTLRLWSS (140 aa). The region spanning 154–242 is the Ig-like C1-type domain; that stretch reads KSVCLFTDFD…LVEKSFETDT (89 aa). The cysteines at positions 157 and 207 are disulfide-linked. N-linked (GlcNAc...) asparagine glycosylation is found at Asn167, Asn201, Asn212, and Asn248. Residues 229 to 250 are connecting peptide; the sequence is CDVKLVEKSFETDTNLNFQNLS. The chain crosses the membrane as a helical span at residues 251–273; sequence VIGFRILLLKVAGFNLLMTLRLW. Residues 274–275 lie on the Cytoplasmic side of the membrane; that stretch reads SS.

Disulfide-linked heterodimer with TRBV25-1*01J2S3*01C2*01 beta chain. The alpha-beta TR associates with the transmembrane signaling CD3 coreceptor proteins to form the TR-CD3 (TCR). The assembly of alpha-beta TR heterodimers with CD3 occurs in the endoplasmic reticulum where a single alpha-beta TR heterodimer associates with one CD3D-CD3E heterodimer, one CD3G-CD3E heterodimer and one CD247 homodimer forming a stable octameric structure. CD3D-CD3E and CD3G-CD3E heterodimers preferentially associate with TR alpha and TR beta chains (via TM domain), respectively. The association of the CD247 homodimer is the last step of TCR assembly in the endoplasmic reticulum and is required for transport to the cell surface. As to expression, expressed in MR1-restricted CD8-positive T cells.

The protein localises to the cell membrane. Functionally, the alpha chain of TRAV38-2DV8*01J31*01C*01/TRBV25-1*01J2S3*01C2*01 alpha-beta T cell receptor (TR) clonotype that displays pan-cancer cell recognition via the invariant MR1 molecule. On CD8-positive T cell clone MC.7.G5, likely recognizes tumor-specific or -associated metabolite(s) essential for cancer cell survival, triggering killing of many cancer cell types including lung, melanoma, leukemia, colon, breast, prostate, bone and ovarian cancer cells. Mediates cancer cell cytotoxicity in an HLA-independent manner. Has no reactivity to healthy cells, even stressed or infected by bacteria. Antigen recognition initiates TR-CD3 clustering on the cell surface and intracellular activation of LCK that phosphorylates the ITAM motifs of CD3G, CD3D, CD3E and CD247 enabling the recruitment of ZAP70. In turn, ZAP70 phosphorylates LAT, which recruits numerous signaling molecules to form the LAT signalosome. The LAT signalosome propagates signal branching to three major signaling pathways, the calcium, the mitogen-activated protein kinase (MAPK) kinase and the nuclear factor NF-kappa-B (NF-kB) pathways, leading to the mobilization of transcription factors that are critical for gene expression and essential for T cell differentiation into effector/memory T cells. This chain is T cell receptor alpha chain MC.7.G5, found in Homo sapiens (Human).